Consider the following 303-residue polypeptide: Inner kinetochore subunit mal2 (303 aa).

Belongs to the CENP-O/MCM21 family. In terms of assembly, component of the heterotetrameric kinetochore subcomplex COMA, which consists of fta2, fta7, mal2 and mis17. The COMA subcomplex is part of a larger constitutive centromere-associated network (CCAN) (also known as central kinetochore Sim4 complex in fission yeast), which is composed of at least cnl2, cnp3, cnp20, fta1, fta2, fta3, fta4, fta6, fta7, mal2, mhf1, mhf2, mis6, mis15, mis17, sim4 and wip1.

It is found in the nucleus. Its subcellular location is the chromosome. It localises to the centromere. The protein localises to the kinetochore. Its function is as follows. Component of the kinetochore, a multiprotein complex that assembles on centromeric DNA and attaches chromosomes to spindle microtubules, mediating chromosome segregation and sister chromatid segregation during meiosis and mitosis. Component of the inner kinetochore COMA complex, which connects centromere-associated proteins and the outer kinetochore. COMA interacts with other inner kinetochore proteins to form the inner kinetochore constitutive centromere-associated network (CCAN), which serves as a structural platform for outer kinetochore assembly. This is Inner kinetochore subunit mal2 (mal2) from Schizosaccharomyces pombe (strain 972 / ATCC 24843) (Fission yeast).